Reading from the N-terminus, the 460-residue chain is MGSKSPNGEDRGPNGPSAKKAVASINPPKSAAASGLLRGALEDQDEDGDDDEGKIGADMNVSEKTANGTKKRRRNNKKKKSAQAAQQTAPPRVEIATLFHNRPYPEGEIVEYGINDENLVRTTDEEFRHLAVANNMNDEFLRDYRKAAEVHRQVRQYAQTIAKPGISMTELAREIEDGVRALVGHQGIETGDSLKAGMGFPTGLCINNVAAHWTPNPGAREVVLQHDDVLSIDFGVHVNGRIVDSAFTVAFNPMYDKLLTAVKAATNTGLKESGIDARMDYISETIQEVMESYEVMINGKPLPVKALSSLSGHNILRYKIHGDKQVPFVKTRTSQRMEEGDVFAIETFGSTGIGRTRDDVGVYGYSRNENVSTAGVHLASAKSLLKAIDENFGTLPFSRNYLERIGVKNYHLGMRSLIASGVVECYAPLVDTPGSYVAQFEHTVLLRPNCKEIISRGDDY.

The segment at 1–90 (MGSKSPNGED…SAQAAQQTAP (90 aa)) is disordered. Low complexity predominate over residues 30–39 (SAAASGLLRG). Acidic residues predominate over residues 42–52 (EDQDEDGDDDE). Positions 69 to 81 (TKKRRRNNKKKKS) are enriched in basic residues. H212 contacts substrate. A divalent metal cation contacts are provided by D233, D244, and H313. H321 lines the substrate pocket. Residues E346 and E441 each coordinate a divalent metal cation.

It belongs to the peptidase M24A family. Methionine aminopeptidase eukaryotic type 2 subfamily. The cofactor is Co(2+). Zn(2+) serves as cofactor. It depends on Mn(2+) as a cofactor. Fe(2+) is required as a cofactor.

It localises to the cytoplasm. It carries out the reaction Release of N-terminal amino acids, preferentially methionine, from peptides and arylamides.. Its function is as follows. Cotranslationally removes the N-terminal methionine from nascent proteins. The N-terminal methionine is often cleaved when the second residue in the primary sequence is small and uncharged (Met-Ala-, Cys, Gly, Pro, Ser, Thr, or Val). This Leptosphaeria maculans (strain JN3 / isolate v23.1.3 / race Av1-4-5-6-7-8) (Blackleg fungus) protein is Methionine aminopeptidase 2-1.